We begin with the raw amino-acid sequence, 373 residues long: Flap endonuclease 1 (373 aa).

Residues 1-105 (MGIKGLNALI…GELEKRLKRR (105 aa)) form an N-domain region. Asp34 is a binding site for Mg(2+). Residues Arg47 and Arg71 each contribute to the DNA site. Residues Asp87, Glu159, Glu161, Asp180, and Asp182 each coordinate Mg(2+). Residues 123 to 254 (DIAKFERRTV…VTAFKLIKEH (132 aa)) are I-domain. Glu159 serves as a coordination point for DNA. 2 residues coordinate DNA: Gly232 and Asp234. Asp234 contacts Mg(2+). Residues 340-348 (TQGRLDKFF) form an interaction with PCNA region. The disordered stretch occupies residues 347–373 (FFVVKKRPAEEKKGKNTKEEKPKKKRK).

This sequence belongs to the XPG/RAD2 endonuclease family. FEN1 subfamily. Interacts with PCNA. Three molecules of FEN1 bind to one PCNA trimer with each molecule binding to one PCNA monomer. PCNA stimulates the nuclease activity without altering cleavage specificity. Mg(2+) serves as cofactor. Post-translationally, phosphorylated. Phosphorylation upon DNA damage induces relocalization to the nuclear plasma.

The protein resides in the nucleus. The protein localises to the nucleolus. Its subcellular location is the nucleoplasm. It is found in the mitochondrion. Functionally, structure-specific nuclease with 5'-flap endonuclease and 5'-3' exonuclease activities involved in DNA replication and repair. During DNA replication, cleaves the 5'-overhanging flap structure that is generated by displacement synthesis when DNA polymerase encounters the 5'-end of a downstream Okazaki fragment. It enters the flap from the 5'-end and then tracks to cleave the flap base, leaving a nick for ligation. Also involved in the long patch base excision repair (LP-BER) pathway, by cleaving within the apurinic/apyrimidinic (AP) site-terminated flap. Acts as a genome stabilization factor that prevents flaps from equilibrating into structures that lead to duplications and deletions. Also possesses 5'-3' exonuclease activity on nicked or gapped double-stranded DNA, and exhibits RNase H activity. Also involved in replication and repair of rDNA and in repairing mitochondrial DNA. The polypeptide is Flap endonuclease 1 (Komagataella phaffii (strain GS115 / ATCC 20864) (Yeast)).